The following is a 129-amino-acid chain: Follitropin subunit beta (129 aa).

The N-terminal stretch at 1-20 is a signal peptide; it reads MKSLQFCFLFCCWKAICCNS. 6 cysteine pairs are disulfide-bonded: cysteine 21–cysteine 69, cysteine 35–cysteine 84, cysteine 38–cysteine 122, cysteine 46–cysteine 100, cysteine 50–cysteine 102, and cysteine 105–cysteine 112. Residues asparagine 25 and asparagine 42 are each glycosylated (N-linked (GlcNAc...) asparagine).

The protein belongs to the glycoprotein hormones subunit beta family. In terms of assembly, heterodimer. The active follitropin is a heterodimer composed of an alpha chain/CGA shared with other hormones and a unique beta chain/FSHB shown here.

The protein resides in the secreted. In terms of biological role, together with the alpha chain CGA constitutes follitropin, the follicle-stimulating hormone, and provides its biological specificity to the hormone heterodimer. Binds FSHR, a G protein-coupled receptor, on target cells to activate downstream signaling pathways. Follitropin is involved in follicle development and spermatogenesis in reproductive organs. This chain is Follitropin subunit beta (FSHB), found in Sus scrofa (Pig).